A 1276-amino-acid polypeptide reads, in one-letter code: Component of gems protein 5 (1276 aa).

An interaction with U4 snRNA region spans residues 53 to 55 (NWY). WD repeat units lie at residues 92 to 139 (GHTD…DDHN), 183 to 223 (EHKA…VFPI), 228 to 268 (GNNI…TVCK), 271 to 336 (AHSA…IESG), 364 to 405 (NDKQ…SPPE), 438 to 481 (TTKN…IKIQ), 485 to 522 (GFVY…KDAY), and 530 to 574 (GIQS…SKIF). The tract at residues 138–157 (HNEDTEIGDDFKHGSGGGGS) is disordered. Positions 586–652 (IWKPPPTPTP…NSNNEQQPNK (67 aa)) are disordered. Over residues 598–646 (NINNNNNNNNNNNNNNNNNNNNNNNNNNNNNNNNNNNNINNNNNNNSNN) the composition is skewed to low complexity. 2 WD repeats span residues 688–727 (TFSK…LTRI) and 729–771 (EHKK…NQNE). The segment covering 772–793 (NEKKIDNEKGKENENEKGKENE) has biased composition (basic and acidic residues). The disordered stretch occupies residues 772 to 809 (NEKKIDNEKGKENENEKGKENENENENENENENENENE). Residues 778 to 829 (NEKGKENENEKGKENENENENENENENENENENEIENIVNNNNENDTEIEIK) adopt a coiled-coil conformation. Residues 794–809 (NENENENENENENENE) are compositionally biased toward acidic residues. WD repeat units lie at residues 863-903 (GHKN…AISN) and 906-946 (GHDG…FKTV). The segment at 967–997 (ITEQQQQQQQPQSPIKSNPDQSNNPSLVPPI) is disordered. Positions 979-992 (SPIKSNPDQSNNPS) are enriched in polar residues.

This sequence belongs to the WD repeat gemin-5 family. In terms of assembly, part of the core SMN complex.

Its subcellular location is the nucleus. The protein localises to the nucleoplasm. The protein resides in the gem. It is found in the cytoplasm. Its function is as follows. The SMN complex catalyzes the assembly of small nuclear ribonucleoproteins (snRNPs), the building blocks of the spliceosome, and thereby plays an important role in the splicing of cellular pre-mRNAs. Most spliceosomal snRNPs contain a common set of Sm proteins SNRPB, SNRPD1, SNRPD2, SNRPD3, SNRPE, SNRPF and SNRPG that assemble in a heptameric protein ring on the Sm site of the small nuclear RNA to form the core snRNP (Sm core). In the cytosol, the Sm proteins SNRPD1, SNRPD2, SNRPE, SNRPF and SNRPG are trapped in an inactive 6S pICln-Sm complex by the chaperone CLNS1A that controls the assembly of the core snRNP. To assemble core snRNPs, the SMN complex accepts the trapped 5Sm proteins from CLNS1A forming an intermediate. Binding of snRNA inside 5Sm ultimately triggers eviction of the SMN complex, thereby allowing binding of SNRPD3 and SNRPB to complete assembly of the core snRNP. Within the SMN complex, GEMIN5 recognizes and delivers the small nuclear RNAs (snRNAs) to the SMN complex. Binds to the 7-methylguanosine cap of RNA molecules. The polypeptide is Component of gems protein 5 (gemin5) (Dictyostelium discoideum (Social amoeba)).